Here is a 674-residue protein sequence, read N- to C-terminus: DNA ligase (674 aa).

NAD(+) is bound by residues 34–38, 83–84, and Glu114; these read DSEYD and SL. Residue Lys116 is the N6-AMP-lysine intermediate of the active site. NAD(+) is bound by residues Arg137, Glu174, Lys290, and Lys314. Residues Cys405, Cys408, Cys424, and Cys429 each contribute to the Zn(2+) site. Residues 587–674 form the BRCT domain; it reads QSGTQFDGKM…KLSLIENTKF (88 aa).

This sequence belongs to the NAD-dependent DNA ligase family. LigA subfamily. Requires Mg(2+) as cofactor. The cofactor is Mn(2+).

It catalyses the reaction NAD(+) + (deoxyribonucleotide)n-3'-hydroxyl + 5'-phospho-(deoxyribonucleotide)m = (deoxyribonucleotide)n+m + AMP + beta-nicotinamide D-nucleotide.. In terms of biological role, DNA ligase that catalyzes the formation of phosphodiester linkages between 5'-phosphoryl and 3'-hydroxyl groups in double-stranded DNA using NAD as a coenzyme and as the energy source for the reaction. It is essential for DNA replication and repair of damaged DNA. The protein is DNA ligase of Endomicrobium trichonymphae.